Consider the following 361-residue polypeptide: Serine/threonine-protein kinase SRK2I (361 aa).

A Protein kinase domain is found at 22-278; sequence YDFVKDIGSG…IPEIKTHSWF (257 aa). Residues 28–36 and Lys51 contribute to the ATP site; that span reads IGSGNFGVA. Residue Asp141 is the Proton acceptor of the active site.

The protein belongs to the protein kinase superfamily. Ser/Thr protein kinase family. Interacts with ABI1. Interacts with I-2 and TOPP1. Interacts with FREE1 (via C-terminus). In terms of processing, autophosphorylated in vitro. As to expression, expressed at low levels in seeds, seedlings, roots (especially in tips), stems, leaves, shoots, flowers and siliques.

It catalyses the reaction L-seryl-[protein] + ATP = O-phospho-L-seryl-[protein] + ADP + H(+). It carries out the reaction L-threonyl-[protein] + ATP = O-phospho-L-threonyl-[protein] + ADP + H(+). Its activity is regulated as follows. Activated by autophosphorylation of its activation loop. Together with SRK2D, key component and activator of the abscisic acid (ABA) signaling pathway that regulates numerous ABA responses, such as seed germination, Pro accumulation, root growth inhibition, dormancy and seedling growth, and, to a lesser extent, stomatal closure. In response to ABA, phosphorylates the ESCRT-I complex component FREE1, which is required for ABA-induced FREE1 nuclear import. The sequence is that of Serine/threonine-protein kinase SRK2I (SRK2I) from Arabidopsis thaliana (Mouse-ear cress).